The sequence spans 677 residues: Zinc finger CCCH domain-containing protein 23 (677 aa).

The disordered stretch occupies residues 66–117 (PPQAASSSPTVPAAHSPFLLSRQNSGRCPAPSPSSWAQAQPFSRSNSMGNGG). The span at 69–82 (AASSSPTVPAAHSP) shows a compositional bias: low complexity. The segment covering 98–113 (PSSWAQAQPFSRSNSM) has biased composition (polar residues). The C3H1-type zinc-finger motif lies at 228-255 (GFGWKPCLYYARGFCKNGSTCRFVHGGL). One can recognise an RRM domain in the interval 359 to 435 (RQIYLTFPAD…RVLVKPYKEK (77 aa)). The stretch at 480–513 (ANELMLRRKLEEQQQAAELQQAIDLHSRRLIGLQ) forms a coiled coil. A compositionally biased stretch (polar residues) spans 535-562 (TPITNAFTSGQPGATTIVESPPSSTGQL). The tract at residues 535 to 607 (TPITNAFTSG…EHNLPDSPFA (73 aa)) is disordered. Positions 589–601 (RNADSDQSGEHNL) are enriched in basic and acidic residues.

The polypeptide is Zinc finger CCCH domain-containing protein 23 (Oryza sativa subsp. japonica (Rice)).